The following is a 921-amino-acid chain: DNA mismatch repair protein MutS 1 (921 aa).

619 to 626 (GPNMSGKS) is an ATP binding site. Residues 837–887 (FRDGAAQSGGAAAGSTAEPVATDGDPEHAPGEAAAEGPKGDERAASLDSET) are disordered. A compositionally biased stretch (low complexity) spans 840 to 853 (GAAQSGGAAAGSTA).

This sequence belongs to the DNA mismatch repair MutS family.

This protein is involved in the repair of mismatches in DNA. It is possible that it carries out the mismatch recognition step. This protein has a weak ATPase activity. The polypeptide is DNA mismatch repair protein MutS 1 (Haloarcula marismortui (strain ATCC 43049 / DSM 3752 / JCM 8966 / VKM B-1809) (Halobacterium marismortui)).